We begin with the raw amino-acid sequence, 275 residues long: Chemotaxis protein methyltransferase 1 (275 aa).

The CheR-type methyltransferase domain maps to 1-275 (MTAITISDQE…CNPGIIYKLK (275 aa)). S-adenosyl-L-methionine-binding positions include asparagine 76, threonine 78, arginine 82, glutamate 117, aspartate 145, 201–202 (NL), and 218–219 (RN).

The enzyme catalyses L-glutamyl-[protein] + S-adenosyl-L-methionine = [protein]-L-glutamate 5-O-methyl ester + S-adenosyl-L-homocysteine. Methylation of the membrane-bound methyl-accepting chemotaxis proteins (MCP) to form gamma-glutamyl methyl ester residues in MCP. The protein is Chemotaxis protein methyltransferase 1 (cheR1) of Vibrio cholerae serotype O1 (strain ATCC 39315 / El Tor Inaba N16961).